Consider the following 151-residue polypeptide: Aspartate 1-decarboxylase (151 aa).

Catalysis depends on Ser-26, which acts as the Schiff-base intermediate with substrate; via pyruvic acid. Ser-26 bears the Pyruvic acid (Ser) mark. Thr-58 contributes to the substrate binding site. Tyr-59 functions as the Proton donor in the catalytic mechanism. 74–76 (GGA) is a binding site for substrate.

This sequence belongs to the PanD family. In terms of assembly, heterooctamer of four alpha and four beta subunits. Requires pyruvate as cofactor. Post-translationally, is synthesized initially as an inactive proenzyme, which is activated by self-cleavage at a specific serine bond to produce a beta-subunit with a hydroxyl group at its C-terminus and an alpha-subunit with a pyruvoyl group at its N-terminus.

It localises to the cytoplasm. It catalyses the reaction L-aspartate + H(+) = beta-alanine + CO2. It participates in cofactor biosynthesis; (R)-pantothenate biosynthesis; beta-alanine from L-aspartate: step 1/1. Catalyzes the pyruvoyl-dependent decarboxylation of aspartate to produce beta-alanine. In Crocosphaera subtropica (strain ATCC 51142 / BH68) (Cyanothece sp. (strain ATCC 51142)), this protein is Aspartate 1-decarboxylase.